The sequence spans 338 residues: RNA 3'-terminal phosphate cyclase (338 aa).

Residues Gln103 and 283–287 each bind ATP; that span reads YLADQ. His308 serves as the catalytic Tele-AMP-histidine intermediate.

It belongs to the RNA 3'-terminal cyclase family. Type 1 subfamily.

It is found in the cytoplasm. It carries out the reaction a 3'-end 3'-phospho-ribonucleotide-RNA + ATP = a 3'-end 2',3'-cyclophospho-ribonucleotide-RNA + AMP + diphosphate. Its function is as follows. Catalyzes the conversion of 3'-phosphate to a 2',3'-cyclic phosphodiester at the end of RNA. The mechanism of action of the enzyme occurs in 3 steps: (A) adenylation of the enzyme by ATP; (B) transfer of adenylate to an RNA-N3'P to produce RNA-N3'PP5'A; (C) and attack of the adjacent 2'-hydroxyl on the 3'-phosphorus in the diester linkage to produce the cyclic end product. The biological role of this enzyme is unknown but it is likely to function in some aspects of cellular RNA processing. The sequence is that of RNA 3'-terminal phosphate cyclase from Escherichia coli O81 (strain ED1a).